The following is a 138-amino-acid chain: Large ribosomal subunit protein bL19 (138 aa).

It belongs to the bacterial ribosomal protein bL19 family.

In terms of biological role, this protein is located at the 30S-50S ribosomal subunit interface and may play a role in the structure and function of the aminoacyl-tRNA binding site. The protein is Large ribosomal subunit protein bL19 of Rickettsia felis (strain ATCC VR-1525 / URRWXCal2) (Rickettsia azadi).